Consider the following 246-residue polypeptide: Small ribosomal subunit protein uS3 (246 aa).

Residues 23 to 94 enclose the KH type-2 domain; the sequence is LNEFLTRELA…RIELYAEKVA (72 aa). Positions 201 to 246 are disordered; that stretch reads GPKKPLPDNVSVVEPKEEKIYETPETEYKIPPPSKPLDDLSEAKVL. Composition is skewed to basic and acidic residues over residues 214–228 and 236–246; these read EPKEEKIYETPETEY and PLDDLSEAKVL. A phosphothreonine mark is found at Thr223 and Thr226. At Ser241 the chain carries Phosphoserine.

The protein belongs to the universal ribosomal protein uS3 family. As to quaternary structure, interacts with LTV1; the interaction is RNA-independent.

It localises to the cytoplasm. The protein resides in the nucleus. Its function is as follows. Has DNA repair activity directed towards the mutagenic lesions 8-oxoguanine and abasic sites in DNA. It can cleave DNA containing 8-oxoguanine residues efficiently. Also acts as an ap lyase, cleaving phosphodiester bonds via a beta,delta elimination reaction. The sequence is that of Small ribosomal subunit protein uS3 (RpS3) from Drosophila melanogaster (Fruit fly).